Reading from the N-terminus, the 236-residue chain is Phosphoserine phosphatase (236 aa).

Asp-30 acts as the Nucleophile in catalysis. Mg(2+) is bound by residues Asp-30 and Asp-32. Asp-32 (proton donor) is an active-site residue. Residues Glu-39, Arg-76, 120 to 121 (SG), and Lys-169 each bind substrate. A Mg(2+)-binding site is contributed by Asp-192. Position 195 (Asn-195) interacts with substrate.

The protein belongs to the HAD-like hydrolase superfamily. SerB family. It depends on Mg(2+) as a cofactor.

The catalysed reaction is O-phospho-L-serine + H2O = L-serine + phosphate. It carries out the reaction O-phospho-D-serine + H2O = D-serine + phosphate. It functions in the pathway amino-acid biosynthesis; L-serine biosynthesis; L-serine from 3-phospho-D-glycerate: step 3/3. This chain is Phosphoserine phosphatase, found in Polaromonas sp. (strain JS666 / ATCC BAA-500).